We begin with the raw amino-acid sequence, 391 residues long: Multidrug resistance protein MdtL (391 aa).

The next 12 helical transmembrane spans lie at 4–24 (FLIC…MYLV), 42–62 (IAFS…GKVA), 69–89 (PVAI…SLAE), 93–113 (LFLA…VVAF), 134–154 (GITC…MLNF), 158–178 (SLFW…LFIL), 203–222 (FFLS…LTFV), 245–265 (ALTA…LGIF), 269–289 (TLMI…AVSP), 293–313 (VSLF…GVAM), 331–351 (LGIA…VVGI), and 356–376 (MLIG…MFVA).

This sequence belongs to the major facilitator superfamily. DHA1 family. MdtL (TC 2.A.1.2.22) subfamily.

The protein resides in the cell inner membrane. Functionally, confers resistance to chloramphenicol. The protein is Multidrug resistance protein MdtL of Escherichia coli O81 (strain ED1a).